We begin with the raw amino-acid sequence, 141 residues long: Hemoglobin subunit alpha-D (141 aa).

The Globin domain maps to 1–141 (MLTAEDKKLI…VSAVLAEKYR (141 aa)). Residues His-58 and His-87 each coordinate heme b.

It belongs to the globin family. Heterotetramer of two alpha-D chains and two beta chains. As to expression, red blood cells.

In terms of biological role, involved in oxygen transport from the lung to the various peripheral tissues. This is Hemoglobin subunit alpha-D (HBAD) from Meleagris gallopavo (Wild turkey).